Reading from the N-terminus, the 163-residue chain is Nucleotide-binding protein KPK_4305 (163 aa).

It belongs to the YajQ family.

Functionally, nucleotide-binding protein. This is Nucleotide-binding protein KPK_4305 from Klebsiella pneumoniae (strain 342).